We begin with the raw amino-acid sequence, 351 residues long: Rhodopsin (351 aa).

Over 1-36 the chain is Extracellular; the sequence is MNGTEGPFFYIPMSNATGLVRSPYDYPQYYLVPPWG. 2 N-linked (GlcNAc...) asparagine glycosylation sites follow: N2 and N15. Residues 37-61 traverse the membrane as a helical segment; sequence YACLAAYMFLLILTGFPVNFLTLYV. The Cytoplasmic portion of the chain corresponds to 62–73; that stretch reads TIEHKKLRSPLN. A helical membrane pass occupies residues 74–96; that stretch reads YILLNLAVADLFMVIGGFTTTMW. Topologically, residues 97-110 are extracellular; that stretch reads TSLNGYFVFGRMGC. C110 and C187 are oxidised to a cystine. The chain crosses the membrane as a helical span at residues 111–133; sequence NIEGFFATLGGEIALWSLVVLSM. The 'Ionic lock' involved in activated form stabilization signature appears at 134–136; the sequence is ERW. Over 134–152 the chain is Cytoplasmic; it reads ERWIVVCKPISNFRFGENH. A helical transmembrane segment spans residues 153-173; that stretch reads AVMGVAFSWFMAAACAVPPLV. Topologically, residues 174–202 are extracellular; the sequence is GWSRYIPEGMQCSCGIDYYTRAEGFNNES. The N-linked (GlcNAc...) asparagine glycan is linked to N200. The helical transmembrane segment at 203-224 threads the bilayer; sequence FVIYMFVVHFTCPLTIITFCYG. At 225–252 the chain is on the cytoplasmic side; the sequence is RLVCTVKEAAAQQQESETTQRAEREVTR. The chain crosses the membrane as a helical span at residues 253–274; sequence MVIIMFVAFLACWVPYASVAWY. Topologically, residues 275–286 are extracellular; the sequence is IFTHQGSEFGPV. Residues 287–308 form a helical membrane-spanning segment; it reads FMTIPAFFAKSSAVYNPVIYIC. K296 is subject to N6-(retinylidene)lysine. Topologically, residues 309–351 are cytoplasmic; it reads LNKQFRHCMITTLCCGKNPFEEEEGSTTASKTEASSVCSVSPA. 2 S-palmitoyl cysteine lipidation sites follow: C322 and C323. A disordered region spans residues 330-351; sequence EEEGSTTASKTEASSVCSVSPA. Over residues 334 to 351 the composition is skewed to polar residues; that stretch reads STTASKTEASSVCSVSPA.

The protein belongs to the G-protein coupled receptor 1 family. Opsin subfamily. In terms of processing, phosphorylated on some or all of the serine and threonine residues present in the C-terminal region. Post-translationally, contains one covalently linked retinal chromophore.

It is found in the membrane. The protein resides in the cell projection. It localises to the cilium. Its subcellular location is the photoreceptor outer segment. Its function is as follows. Photoreceptor required for image-forming vision at low light intensity. While most salt water fish species use retinal as chromophore, most freshwater fish use 3-dehydroretinal, or a mixture of retinal and 3-dehydroretinal. Light-induced isomerization of 11-cis to all-trans retinal triggers a conformational change that activates signaling via G-proteins. Subsequent receptor phosphorylation mediates displacement of the bound G-protein alpha subunit by arrestin and terminates signaling. This chain is Rhodopsin (rho), found in Sardina pilchardus (European pilchard).